The following is a 1356-amino-acid chain: RHO1 GDP-GTP exchange protein 2 (1356 aa).

Ser-2 carries the N-acetylserine modification. 2 disordered regions span residues 74–94 (RRSG…EMKG) and 109–175 (EVPD…PRNE). A Phosphoserine modification is found at Ser-76. Polar residues-rich tracts occupy residues 109 to 125 (EVPD…TPVS) and 147 to 157 (HIYSTSNSASR). The residue at position 193 (Ser-193) is a Phosphoserine. Disordered regions lie at residues 202–291 (LKKQ…RSMS), 303–362 (SFQS…SSSN), 383–409 (SVSG…VMSA), 531–571 (GNHS…SQQK), and 626–645 (NISM…TSSV). The segment covering 204–221 (KQSSFSTGSASTTPTQAR) has biased composition (polar residues). At Ser-223 the chain carries Phosphoserine. Basic and acidic residues predominate over residues 235 to 244 (SSKDLHEQHQ). The span at 250–265 (QHNNINNHNNNNTNNN) shows a compositional bias: low complexity. The span at 271–281 (VGSSNSNYPQH) shows a compositional bias: polar residues. Residues 282–291 (SHSISSRSMS) show a composition bias toward low complexity. Over residues 303 to 325 (SFQSKTSNSRKATQKYDITSNPF) the composition is skewed to polar residues. The span at 329–338 (HHHHHHHHSS) shows a compositional bias: basic residues. Low complexity-rich tracts occupy residues 339-362 (NSHS…SSSN) and 383-401 (SVSG…TPLS). A phosphoserine mark is found at Ser-566 and Ser-628. The 188-residue stretch at 659 to 846 (KRQEAIYEVY…RDFMKRIDQA (188 aa)) folds into the DH domain. Positions 1034-1336 (TNKINSVTSC…RLLQTSTQEI (303 aa)) constitute a CNH domain.

Functionally, stimulates the exchange of RHO1 GDP-bound form into GTP-bound form. The protein is RHO1 GDP-GTP exchange protein 2 (ROM2) of Saccharomyces cerevisiae (strain ATCC 204508 / S288c) (Baker's yeast).